The sequence spans 1099 residues: DNA-directed RNA polymerase subunit beta (1099 aa).

Belongs to the RNA polymerase beta chain family. In terms of assembly, in plastids the minimal PEP RNA polymerase catalytic core is composed of four subunits: alpha, beta, beta', and beta''. When a (nuclear-encoded) sigma factor is associated with the core the holoenzyme is formed, which can initiate transcription.

It localises to the plastid. It is found in the chloroplast. It catalyses the reaction RNA(n) + a ribonucleoside 5'-triphosphate = RNA(n+1) + diphosphate. Functionally, DNA-dependent RNA polymerase catalyzes the transcription of DNA into RNA using the four ribonucleoside triphosphates as substrates. This chain is DNA-directed RNA polymerase subunit beta, found in Bigelowiella natans (Pedinomonas minutissima).